A 103-amino-acid chain; its full sequence is Large ribosomal subunit protein bL21 (103 aa).

The protein belongs to the bacterial ribosomal protein bL21 family. In terms of assembly, part of the 50S ribosomal subunit. Contacts protein L20.

In terms of biological role, this protein binds to 23S rRNA in the presence of protein L20. The chain is Large ribosomal subunit protein bL21 from Alkaliphilus oremlandii (strain OhILAs) (Clostridium oremlandii (strain OhILAs)).